The following is a 403-amino-acid chain: Aminomethyltransferase, mitochondrial (403 aa).

Residues 1 to 28 constitute a mitochondrion transit peptide; the sequence is MHRIVSVVAPLGFRLQAQPLVQSRPLSS. Substrate-binding residues include E232 and R261. An N6-succinyllysine modification is found at K368. Y399 serves as a coordination point for substrate.

The protein belongs to the GcvT family. As to quaternary structure, the glycine cleavage system is composed of four proteins: P, T, L and H.

It localises to the mitochondrion. It carries out the reaction N(6)-[(R)-S(8)-aminomethyldihydrolipoyl]-L-lysyl-[protein] + (6S)-5,6,7,8-tetrahydrofolate = N(6)-[(R)-dihydrolipoyl]-L-lysyl-[protein] + (6R)-5,10-methylene-5,6,7,8-tetrahydrofolate + NH4(+). Its function is as follows. The glycine cleavage system catalyzes the degradation of glycine. The protein is Aminomethyltransferase, mitochondrial of Mus musculus (Mouse).